The sequence spans 122 residues: Large ribosomal subunit protein eL31 (122 aa).

It belongs to the eukaryotic ribosomal protein eL31 family.

This is Large ribosomal subunit protein eL31 from Caenorhabditis elegans.